The chain runs to 564 residues: Protein NRT1/ PTR FAMILY 5.16 (564 aa).

The next 2 membrane-spanning stretches (helical) occupy residues 49–69 and 80–100; these read FAYF…LGQS and WSGT…AYLG. Thr-104 carries the post-translational modification Phosphothreonine. 10 helical membrane passes run 110-130, 145-165, 192-212, 220-240, 327-347, 358-378, 408-428, 450-470, 486-506, and 533-553; these read LIYI…LMGL, FFWV…GQGG, FFNW…IVVV, WALG…LFLF, IPIW…ATFF, ILPG…LSIF, IGAG…VEMK, IWWF…SLVG, IGLA…GFLI, and YFYW…LLLS.

This sequence belongs to the major facilitator superfamily. Proton-dependent oligopeptide transporter (POT/PTR) (TC 2.A.17) family. As to expression, expressed in shoots and roots.

Its subcellular location is the membrane. The chain is Protein NRT1/ PTR FAMILY 5.16 (NPF5.16) from Arabidopsis thaliana (Mouse-ear cress).